We begin with the raw amino-acid sequence, 843 residues long: Protein P (843 aa).

Residues 1–177 (MPLSYQHFRK…FCGSPYSWEQ (177 aa)) are terminal protein domain (TP). The segment at 178–346 (DLQHGRLVFQ…YCLYHIVNLI (169 aa)) is spacer. A disordered region spans residues 219 to 250 (RKSRLGPQPAQGQLAGRQQGGSGSIRARVHPS). Residues 223-235 (LGPQPAQGQLAGR) are compositionally biased toward low complexity. The segment at 347 to 690 (EDWGPCTEHG…YLNLYPVARQ (344 aa)) is polymerase/reverse transcriptase domain (RT). The Reverse transcriptase domain occupies 357–600 (EHRIRTPRTP…YSLNFMGYVI (244 aa)). The Mg(2+) site is built by D429, D551, and D552.

It belongs to the hepadnaviridae P protein family.

It carries out the reaction DNA(n) + a 2'-deoxyribonucleoside 5'-triphosphate = DNA(n+1) + diphosphate. The catalysed reaction is Endonucleolytic cleavage to 5'-phosphomonoester.. Activated by host HSP70 and HSP40 in vitro to be able to bind the epsilon loop of the pgRNA. Because deletion of the RNase H region renders the protein partly chaperone-independent, the chaperones may be needed indirectly to relieve occlusion of the RNA-binding site by this domain. Inhibited by several reverse-transcriptase inhibitors: Lamivudine, Adefovir and Entecavir. Multifunctional enzyme that converts the viral RNA genome into dsDNA in viral cytoplasmic capsids. This enzyme displays a DNA polymerase activity that can copy either DNA or RNA templates, and a ribonuclease H (RNase H) activity that cleaves the RNA strand of RNA-DNA heteroduplexes in a partially processive 3'- to 5'-endonucleasic mode. Neo-synthesized pregenomic RNA (pgRNA) are encapsidated together with the P protein, and reverse-transcribed inside the nucleocapsid. Initiation of reverse-transcription occurs first by binding the epsilon loop on the pgRNA genome, and is initiated by protein priming, thereby the 5'-end of (-)DNA is covalently linked to P protein. Partial (+)DNA is synthesized from the (-)DNA template and generates the relaxed circular DNA (RC-DNA) genome. After budding and infection, the RC-DNA migrates in the nucleus, and is converted into a plasmid-like covalently closed circular DNA (cccDNA). The activity of P protein does not seem to be necessary for cccDNA generation, and is presumably released from (+)DNA by host nuclear DNA repair machinery. This is Protein P from Hepatitis B virus genotype B2 (isolate Vietnam/16091/1992) (HBV-B).